The sequence spans 152 residues: Xanthine-guanine phosphoribosyltransferase (152 aa).

5-phospho-alpha-D-ribose 1-diphosphate-binding positions include 37-38, Arg69, and 88-96; these read RG and DDLVDTGGT. Arg69 contacts GMP. Asp89 contacts Mg(2+). Residues Asp92 and Ile135 each contribute to the guanine site. 2 residues coordinate xanthine: Asp92 and Ile135. Residues 92–96 and 134–135 contribute to the GMP site; these read DTGGT and WI.

The protein belongs to the purine/pyrimidine phosphoribosyltransferase family. XGPT subfamily. In terms of assembly, homotetramer. It depends on Mg(2+) as a cofactor.

Its subcellular location is the cell inner membrane. The catalysed reaction is GMP + diphosphate = guanine + 5-phospho-alpha-D-ribose 1-diphosphate. It catalyses the reaction XMP + diphosphate = xanthine + 5-phospho-alpha-D-ribose 1-diphosphate. It carries out the reaction IMP + diphosphate = hypoxanthine + 5-phospho-alpha-D-ribose 1-diphosphate. It functions in the pathway purine metabolism; GMP biosynthesis via salvage pathway; GMP from guanine: step 1/1. It participates in purine metabolism; XMP biosynthesis via salvage pathway; XMP from xanthine: step 1/1. Its function is as follows. Purine salvage pathway enzyme that catalyzes the transfer of the ribosyl-5-phosphate group from 5-phospho-alpha-D-ribose 1-diphosphate (PRPP) to the N9 position of the 6-oxopurines guanine and xanthine to form the corresponding ribonucleotides GMP (guanosine 5'-monophosphate) and XMP (xanthosine 5'-monophosphate), with the release of PPi. To a lesser extent, also acts on hypoxanthine. The sequence is that of Xanthine-guanine phosphoribosyltransferase from Salmonella choleraesuis (strain SC-B67).